A 259-amino-acid polypeptide reads, in one-letter code: Thiazole synthase (259 aa).

Lysine 98 (schiff-base intermediate with DXP) is an active-site residue. 1-deoxy-D-xylulose 5-phosphate-binding positions include glycine 159, 185 to 186 (AG), and 207 to 208 (NS).

This sequence belongs to the ThiG family. Homotetramer. Forms heterodimers with either ThiH or ThiS.

It localises to the cytoplasm. The enzyme catalyses [ThiS sulfur-carrier protein]-C-terminal-Gly-aminoethanethioate + 2-iminoacetate + 1-deoxy-D-xylulose 5-phosphate = [ThiS sulfur-carrier protein]-C-terminal Gly-Gly + 2-[(2R,5Z)-2-carboxy-4-methylthiazol-5(2H)-ylidene]ethyl phosphate + 2 H2O + H(+). The protein operates within cofactor biosynthesis; thiamine diphosphate biosynthesis. Catalyzes the rearrangement of 1-deoxy-D-xylulose 5-phosphate (DXP) to produce the thiazole phosphate moiety of thiamine. Sulfur is provided by the thiocarboxylate moiety of the carrier protein ThiS. In vitro, sulfur can be provided by H(2)S. In Chlorobium phaeobacteroides (strain BS1), this protein is Thiazole synthase.